The chain runs to 361 residues: Mannose-1-phosphate guanyltransferase 2 (361 aa).

This sequence belongs to the transferase hexapeptide repeat family.

It localises to the cytoplasm. The enzyme catalyses alpha-D-mannose 1-phosphate + GTP + H(+) = GDP-alpha-D-mannose + diphosphate. It participates in nucleotide-sugar biosynthesis; GDP-alpha-D-mannose biosynthesis; GDP-alpha-D-mannose from alpha-D-mannose 1-phosphate (GTP route): step 1/1. In terms of biological role, involved in cell wall synthesis where it is required for glycosylation. Involved in cell cycle progression through cell-size checkpoint. The sequence is that of Mannose-1-phosphate guanyltransferase 2 (MPG1) from Candida glabrata (strain ATCC 2001 / BCRC 20586 / JCM 3761 / NBRC 0622 / NRRL Y-65 / CBS 138) (Yeast).